The chain runs to 245 residues: UPF0328 protein ECU09_2010 (245 aa).

This sequence belongs to the UPF0328 family.

This is UPF0328 protein ECU09_2010 from Encephalitozoon cuniculi (strain GB-M1) (Microsporidian parasite).